Reading from the N-terminus, the 414-residue chain is ZP domain-containing protein (414 aa).

A signal peptide spans 1 to 17 (MFLYSFVFLMLLGLSSA). Positions 18–65 (QTESATSPDEVETEPTMSTDQPETSPSMSTETEPTTETPPVTTPPPPD) are disordered. Residues 18 to 364 (QTESATSPDE…GAQEAVSSLT (347 aa)) lie on the Extracellular side of the membrane. Low complexity predominate over residues 39–57 (PETSPSMSTETEPTTETPP). The ZP domain maps to 70–323 (ICTNEKMEVF…SRCAKGCETS (254 aa)). The cysteines at positions 241 and 302 are disulfide-linked. The helical transmembrane segment at 365–385 (IFAAVAGVLGVIVLFLAVALV) threads the bilayer. Topologically, residues 386 to 414 (MLYKRYRSPQSATRVVYTKTANEEGKLLV) are cytoplasmic.

In terms of tissue distribution, component of the acid-insoluble and acid-soluble organic matrix of the aragonitic skeleton (at protein level).

Its subcellular location is the membrane. The polypeptide is ZP domain-containing protein (Acropora millepora (Staghorn coral)).